The chain runs to 380 residues: Actinidain (380 aa).

The N-terminal stretch at 1–24 is a signal peptide; that stretch reads MGLPKSFVSMSLLFFSTLLILSLA. Positions 25 to 126 are cleaved as a propeptide — activation peptide; sequence FNAKNLTQRT…NQYEPRVGQV (102 aa). 3 cysteine pairs are disulfide-bonded: Cys148–Cys191, Cys182–Cys224, and Cys282–Cys332. Residue Cys151 is part of the active site. Cys151 serves as a coordination point for E64. Residues His288 and Asn308 contribute to the active site.

This sequence belongs to the peptidase C1 family. Fruit.

The catalysed reaction is Specificity close to that of papain.. Repressed by the active-site-directed cysteine protease inhibitor E64 (L-trans-epoxysuccinyl-leucylamide-(4-guanido)-butane) produced by Aspergillus japonicus. In terms of biological role, cysteine protease responsible for the cleavage of kiwellin into kissper and KiTH. The polypeptide is Actinidain (Actinidia chinensis var. chinensis (Chinese soft-hair kiwi)).